The primary structure comprises 145 residues: D-aminoacyl-tRNA deacylase (145 aa).

Positions 137–138 (GP) match the Gly-cisPro motif, important for rejection of L-amino acids motif.

This sequence belongs to the DTD family. In terms of assembly, homodimer.

It is found in the cytoplasm. It catalyses the reaction glycyl-tRNA(Ala) + H2O = tRNA(Ala) + glycine + H(+). The catalysed reaction is a D-aminoacyl-tRNA + H2O = a tRNA + a D-alpha-amino acid + H(+). Functionally, an aminoacyl-tRNA editing enzyme that deacylates mischarged D-aminoacyl-tRNAs. Also deacylates mischarged glycyl-tRNA(Ala), protecting cells against glycine mischarging by AlaRS. Acts via tRNA-based rather than protein-based catalysis; rejects L-amino acids rather than detecting D-amino acids in the active site. By recycling D-aminoacyl-tRNA to D-amino acids and free tRNA molecules, this enzyme counteracts the toxicity associated with the formation of D-aminoacyl-tRNA entities in vivo and helps enforce protein L-homochirality. This is D-aminoacyl-tRNA deacylase from Alteromonas mediterranea (strain DSM 17117 / CIP 110805 / LMG 28347 / Deep ecotype).